The chain runs to 200 residues: Imidazoleglycerol-phosphate dehydratase (200 aa).

The protein belongs to the imidazoleglycerol-phosphate dehydratase family.

It is found in the cytoplasm. The catalysed reaction is D-erythro-1-(imidazol-4-yl)glycerol 3-phosphate = 3-(imidazol-4-yl)-2-oxopropyl phosphate + H2O. The protein operates within amino-acid biosynthesis; L-histidine biosynthesis; L-histidine from 5-phospho-alpha-D-ribose 1-diphosphate: step 6/9. This chain is Imidazoleglycerol-phosphate dehydratase, found in Chlorobium limicola (strain DSM 245 / NBRC 103803 / 6330).